The sequence spans 382 residues: Membrane protein MLC1 (382 aa).

Positions M1–R28 are enriched in basic and acidic residues. The segment at M1 to L43 is disordered. The next 4 helical transmembrane spans lie at W58–L78, Y88–G107, F117–C137, and I148–I168. 3 positions are modified to phosphoserine: S183, S185, and S188. Helical transmembrane passes span S205 to V225, L234 to V254, L263 to G283, and L309 to I329.

Interacts with ATP1B1. Part of a complex containing ATP1B1, TRPV4, AQP4 and HEPACAM.

It is found in the membrane. Its subcellular location is the cell membrane. It localises to the cytoplasm. The protein localises to the perinuclear region. The protein resides in the endoplasmic reticulum. Transmembrane protein mainly expressed in brain astrocytes that may play a role in transport across the blood-brain and brain-cerebrospinal fluid barriers. Regulates the response of astrocytes to hypo-osmosis by promoting calcium influx. May function as regulatory protein of membrane protein complexes such as ion channels. This is Membrane protein MLC1 from Mus musculus (Mouse).